The primary structure comprises 644 residues: DNA mismatch repair protein MutL (644 aa).

The interval 336-356 (KRNINPLNRDDKTKDKSEYQK) is disordered. Positions 343–356 (NRDDKTKDKSEYQK) are enriched in basic and acidic residues.

It belongs to the DNA mismatch repair MutL/HexB family.

Functionally, this protein is involved in the repair of mismatches in DNA. It is required for dam-dependent methyl-directed DNA mismatch repair. May act as a 'molecular matchmaker', a protein that promotes the formation of a stable complex between two or more DNA-binding proteins in an ATP-dependent manner without itself being part of a final effector complex. The polypeptide is DNA mismatch repair protein MutL (Halothermothrix orenii (strain H 168 / OCM 544 / DSM 9562)).